Reading from the N-terminus, the 244-residue chain is 1-(5-phosphoribosyl)-5-[(5-phosphoribosylamino)methylideneamino] imidazole-4-carboxamide isomerase (244 aa).

Aspartate 8 functions as the Proton acceptor in the catalytic mechanism. Catalysis depends on aspartate 129, which acts as the Proton donor.

This sequence belongs to the HisA/HisF family.

The protein localises to the cytoplasm. The enzyme catalyses 1-(5-phospho-beta-D-ribosyl)-5-[(5-phospho-beta-D-ribosylamino)methylideneamino]imidazole-4-carboxamide = 5-[(5-phospho-1-deoxy-D-ribulos-1-ylimino)methylamino]-1-(5-phospho-beta-D-ribosyl)imidazole-4-carboxamide. Its pathway is amino-acid biosynthesis; L-histidine biosynthesis; L-histidine from 5-phospho-alpha-D-ribose 1-diphosphate: step 4/9. This is 1-(5-phosphoribosyl)-5-[(5-phosphoribosylamino)methylideneamino] imidazole-4-carboxamide isomerase from Thermodesulfovibrio yellowstonii (strain ATCC 51303 / DSM 11347 / YP87).